The following is a 204-amino-acid chain: Holliday junction branch migration complex subunit RuvA (204 aa).

Residues 1 to 63 (MIGWLQGRVL…EDGQFLYGFS (63 aa)) are domain I. The tract at residues 64 to 142 (SFLQRQLFRE…KNDLFLCDES (79 aa)) is domain II. Residues 143–152 (ESSRAPIALS) form a flexible linker region. The domain III stretch occupies residues 152-204 (SASEEAIQALIALELAPAEAELWVKKAQKTLAEDADSAALIKTAFALRLQGAK).

Belongs to the RuvA family. In terms of assembly, homotetramer. Forms an RuvA(8)-RuvB(12)-Holliday junction (HJ) complex. HJ DNA is sandwiched between 2 RuvA tetramers; dsDNA enters through RuvA and exits via RuvB. An RuvB hexamer assembles on each DNA strand where it exits the tetramer. Each RuvB hexamer is contacted by two RuvA subunits (via domain III) on 2 adjacent RuvB subunits; this complex drives branch migration. In the full resolvosome a probable DNA-RuvA(4)-RuvB(12)-RuvC(2) complex forms which resolves the HJ.

The protein localises to the cytoplasm. Functionally, the RuvA-RuvB-RuvC complex processes Holliday junction (HJ) DNA during genetic recombination and DNA repair, while the RuvA-RuvB complex plays an important role in the rescue of blocked DNA replication forks via replication fork reversal (RFR). RuvA specifically binds to HJ cruciform DNA, conferring on it an open structure. The RuvB hexamer acts as an ATP-dependent pump, pulling dsDNA into and through the RuvAB complex. HJ branch migration allows RuvC to scan DNA until it finds its consensus sequence, where it cleaves and resolves the cruciform DNA. This Dichelobacter nodosus (strain VCS1703A) protein is Holliday junction branch migration complex subunit RuvA.